Reading from the N-terminus, the 68-residue chain is MWFQDVRTLKEGLEFNGITLHLTSCQHGCILSRKELNDYVKKINIQMLKSHWMEKQSNYKYLFFNYIK.

This is an uncharacterized protein from Dictyostelium discoideum (Social amoeba).